The chain runs to 325 residues: Heat-inducible transcription repressor HrcA (325 aa).

The protein belongs to the HrcA family.

Negative regulator of class I heat shock genes (grpE-dnaK-dnaJ and groELS operons). Prevents heat-shock induction of these operons. The polypeptide is Heat-inducible transcription repressor HrcA (Staphylococcus aureus (strain MRSA252)).